The sequence spans 382 residues: 1-deoxy-D-xylulose 5-phosphate reductoisomerase (382 aa).

The NADPH site is built by threonine 10, glycine 11, serine 12, isoleucine 13, asparagine 38, and asparagine 120. Lysine 121 lines the 1-deoxy-D-xylulose 5-phosphate pocket. Glutamate 122 provides a ligand contact to NADPH. Mn(2+) is bound at residue aspartate 146. 4 residues coordinate 1-deoxy-D-xylulose 5-phosphate: serine 147, glutamate 148, serine 172, and histidine 195. Glutamate 148 provides a ligand contact to Mn(2+). Glycine 201 lines the NADPH pocket. 1-deoxy-D-xylulose 5-phosphate-binding residues include serine 208, asparagine 213, lysine 214, and glutamate 217. Glutamate 217 is a Mn(2+) binding site.

The protein belongs to the DXR family. It depends on Mg(2+) as a cofactor. The cofactor is Mn(2+).

It carries out the reaction 2-C-methyl-D-erythritol 4-phosphate + NADP(+) = 1-deoxy-D-xylulose 5-phosphate + NADPH + H(+). Its pathway is isoprenoid biosynthesis; isopentenyl diphosphate biosynthesis via DXP pathway; isopentenyl diphosphate from 1-deoxy-D-xylulose 5-phosphate: step 1/6. Its function is as follows. Catalyzes the NADPH-dependent rearrangement and reduction of 1-deoxy-D-xylulose-5-phosphate (DXP) to 2-C-methyl-D-erythritol 4-phosphate (MEP). This is 1-deoxy-D-xylulose 5-phosphate reductoisomerase from Caldanaerobacter subterraneus subsp. tengcongensis (strain DSM 15242 / JCM 11007 / NBRC 100824 / MB4) (Thermoanaerobacter tengcongensis).